The sequence spans 100 residues: Small ribosomal subunit protein bS20 (100 aa).

Over residues 1 to 18 the composition is skewed to basic and acidic residues; that stretch reads MPNKKSAEKRVRQSEQRR. The tract at residues 1–26 is disordered; that stretch reads MPNKKSAEKRVRQSEQRRQKNRGYQK.

The protein belongs to the bacterial ribosomal protein bS20 family.

Binds directly to 16S ribosomal RNA. The polypeptide is Small ribosomal subunit protein bS20 (Petrotoga mobilis (strain DSM 10674 / SJ95)).